The primary structure comprises 98 residues: NADH-ubiquinone oxidoreductase chain 4L (98 aa).

The next 3 helical transmembrane spans lie at 1 to 21 (MTTM…GVFI), 29 to 49 (TLLC…LILL), and 59 to 79 (LPLI…ALLV).

Belongs to the complex I subunit 4L family. In terms of assembly, core subunit of respiratory chain NADH dehydrogenase (Complex I) which is composed of 45 different subunits.

The protein resides in the mitochondrion inner membrane. The enzyme catalyses a ubiquinone + NADH + 5 H(+)(in) = a ubiquinol + NAD(+) + 4 H(+)(out). Core subunit of the mitochondrial membrane respiratory chain NADH dehydrogenase (Complex I) which catalyzes electron transfer from NADH through the respiratory chain, using ubiquinone as an electron acceptor. Part of the enzyme membrane arm which is embedded in the lipid bilayer and involved in proton translocation. This Ornithorhynchus anatinus (Duckbill platypus) protein is NADH-ubiquinone oxidoreductase chain 4L (MT-ND4L).